Here is a 102-residue protein sequence, read N- to C-terminus: NADH-quinone oxidoreductase subunit K (102 aa).

A run of 3 helical transmembrane segments spans residues 6-26 (LTGF…GVLA), 30-50 (ILFQ…AFIA), and 63-83 (MFVL…ALFL).

Belongs to the complex I subunit 4L family. As to quaternary structure, NDH-1 is composed of 14 different subunits. Subunits NuoA, H, J, K, L, M, N constitute the membrane sector of the complex.

The protein resides in the cell inner membrane. It carries out the reaction a quinone + NADH + 5 H(+)(in) = a quinol + NAD(+) + 4 H(+)(out). Functionally, NDH-1 shuttles electrons from NADH, via FMN and iron-sulfur (Fe-S) centers, to quinones in the respiratory chain. The immediate electron acceptor for the enzyme in this species is believed to be ubiquinone. Couples the redox reaction to proton translocation (for every two electrons transferred, four hydrogen ions are translocated across the cytoplasmic membrane), and thus conserves the redox energy in a proton gradient. This chain is NADH-quinone oxidoreductase subunit K, found in Rhodopseudomonas palustris (strain BisA53).